Reading from the N-terminus, the 155-residue chain is Acyl-CoA-binding domain-containing protein 3 (155 aa).

One can recognise an ACB domain in the interval 3–88 (LQEDFEEYAE…VKQLQEEAAA (86 aa)). Residues K15, 30 to 34 (YGLYK), K56, and Y75 each bind an acyl-CoA.

It belongs to the ACBP family. Highly expressed in leaves. Expressed at low levels in roots and seeds.

Its subcellular location is the cytoplasm. The protein localises to the cytosol. Functionally, binds medium- and long-chain acyl-CoA esters with high affinity. Can interact in vitro with linolenoyl-CoA. Binds phosphatidic acid (PA) and phosphatidylcholine (PC) in vitro. May play a role in the biosynthesis of phospholipids. The chain is Acyl-CoA-binding domain-containing protein 3 from Oryza sativa subsp. japonica (Rice).